The following is a 362-amino-acid chain: Ferrochelatase (362 aa).

His228 and Glu309 together coordinate Fe cation.

It belongs to the ferrochelatase family.

Its subcellular location is the cytoplasm. The enzyme catalyses heme b + 2 H(+) = protoporphyrin IX + Fe(2+). The protein operates within porphyrin-containing compound metabolism; protoheme biosynthesis; protoheme from protoporphyrin-IX: step 1/1. Catalyzes the ferrous insertion into protoporphyrin IX. The polypeptide is Ferrochelatase (Bordetella bronchiseptica (strain ATCC BAA-588 / NCTC 13252 / RB50) (Alcaligenes bronchisepticus)).